The chain runs to 48 residues: uncharacterized protein (48 aa).

It is found in the plastid. It localises to the cyanelle. This is an uncharacterized protein from Cyanophora paradoxa.